The sequence spans 442 residues: Glycolipid 2-alpha-mannosyltransferase (442 aa).

Over 1-11 (MALFLSKRLLR) the chain is Cytoplasmic. Residues 12-30 (FTVIAGAVIVLLLTLNSNS) traverse the membrane as a helical; Signal-anchor for type II membrane protein segment. The segment at 31–118 (RTQQYIPSSI…YITPSFANKA (88 aa)) is stem region. At 31-442 (RTQQYIPSSI…KPKNWKKFRE (412 aa)) the chain is on the lumenal side. The tract at residues 68-95 (EQSALNSEASEDSEAMDEESKALKAAAE) is disordered. The span at 85–95 (EESKALKAAAE) shows a compositional bias: basic and acidic residues. The catalytic stretch occupies residues 119–442 (GKPKACYVTL…KPKNWKKFRE (324 aa)). The N-linked (GlcNAc...) asparagine glycan is linked to N197. E329 acts as the Nucleophile in catalysis.

It belongs to the glycosyltransferase 15 family. It depends on Mn(2+) as a cofactor.

Its subcellular location is the golgi apparatus membrane. It participates in protein modification; protein glycosylation. Mannosyltransferase that transfers an alpha-D-mannosyl residue from GDP-mannose into lipid-linked oligosaccharide, forming an alpha-(1-&gt;2)-D-mannosyl-D-mannose linkage. Required for the attachment of the third mannose residue of O-linked saccharides. This is Glycolipid 2-alpha-mannosyltransferase (KRE2) from Saccharomyces cerevisiae (strain ATCC 204508 / S288c) (Baker's yeast).